The sequence spans 876 residues: Serrate RNA effector molecule homolog (876 aa).

Residues 1 to 90 (MGDSDDEYDR…RRDWDEHSSD (90 aa)) form a disordered region. G2 is subject to N-acetylglycine. Residue S4 is modified to Phosphoserine. Y8 carries the phosphotyrosine modification. Over residues 8 to 73 (YDRRRRDKFR…ERFSPPRHEL (66 aa)) the composition is skewed to basic and acidic residues. S67, S74, and S136 each carry phosphoserine. K150 participates in a covalent cross-link: Glycyl lysine isopeptide (Lys-Gly) (interchain with G-Cter in SUMO2). The interval 271-412 (EEEEEQAGKP…KPKDAAGLEC (142 aa)) is disordered. A compositionally biased stretch (basic and acidic residues) spans 297-347 (DGERKTNDKDEKKEDGKQAENDSSNDDKTKKSEGDGDKEEKKEDSEKEAKK). The segment covering 370–387 (SESESESGQAEEEKEEAE) has biased composition (acidic residues). The segment covering 388–412 (EALKEKEKPKEEEWEKPKDAAGLEC) has biased composition (basic and acidic residues). 2 positions are modified to phosphoserine: S493 and S540. Position 544 is a phosphothreonine (T544). S570 is subject to Phosphoserine. Positions 575-598 (ELLGSSGGAPPEEPPKEGNPAEIN) are disordered. Residue T671 is modified to Phosphothreonine. Phosphoserine is present on S679. 3 positions are modified to omega-N-methylarginine: R833, R840, and R850. Residues 835 to 854 (NYDAFRGQGGYPGKPRNRMV) form a disordered region.

The protein belongs to the ARS2 family. As to quaternary structure, interacts with NCBP1 and DROSHA. Interacts with CASP8AP2 and ERBB4. Interacts with LUZP4. Interacts with NCBP2/CBP20 and NCBP3. Interacts with MTREX. Ubiquitously expressed.

It is found in the nucleus. The protein resides in the nucleoplasm. It localises to the cytoplasm. Functionally, acts as a mediator between the cap-binding complex (CBC) and the primary microRNAs (miRNAs) processing machinery during cell proliferation. Contributes to the stability and delivery of capped primary miRNA transcripts to the primary miRNA processing complex containing DGCR8 and DROSHA, thereby playing a role in RNA-mediated gene silencing (RNAi) by miRNAs. Binds capped RNAs (m7GpppG-capped RNA); however interaction is probably mediated via its interaction with NCBP1/CBP80 component of the CBC complex. Involved in cell cycle progression at S phase. Does not directly confer arsenite resistance but rather modulates arsenic sensitivity. Independently of its activity on miRNAs, necessary and sufficient to promote neural stem cell self-renewal. Does so by directly binding SOX2 promoter and positively regulating its transcription. In Homo sapiens (Human), this protein is Serrate RNA effector molecule homolog (SRRT).